The sequence spans 1021 residues: PDZ domain-containing protein 7 (1021 aa).

PDZ domains follow at residues 86–156 and 210–279; these read AVRV…LTSS and IVHL…EVLK. Positions 324–344 are enriched in low complexity; the sequence is SSSSVSSYASSAPCSSGSLPS. 3 disordered regions span residues 324 to 345, 431 to 495, and 724 to 814; these read SSSS…LPSD, ITRS…DSRS, and RRGA…HRPR. Over residues 729–744 the composition is skewed to pro residues; that stretch reads APPPQPPPVAPRPPRP. Positions 758 to 767 are enriched in polar residues; sequence QQNQSQTPAQ. Residues 772-794 are compositionally biased toward basic residues; it reads SRSRSRSRSHSRGQGKSPGRRRS. Positions 799–808 are enriched in low complexity; sequence PIATAATANG. One can recognise a PDZ 3 domain in the interval 858-930; sequence TITLSKMKQS…QRAVDTIRRA (73 aa). The segment at 992 to 1021 is disordered; that stretch reads QLQQSLSSALKVPQSIPKLSPILKDPHDPS.

In terms of assembly, homodimerizes (via PDZ2 domain). Component of USH2 complex, composed of ADGRV1, PDZD7, USH2A and WHRN. Interacts (via PDZ domains) with WHRN; the interaction is direct. Interacts with USH1G. Interacts with ADGRV1 (via the cytoplasmic region). Interacts with USH2A (via the cytoplasmic region). Interacts with MYO7A (via MyTH4-FERM domains). As to expression, isoform 1 is expressed in developing and adult cochlea but not retina. Isoform 2 is expressed in developing and adult cochlea and retina. Isoform 3 is expressed in adult cochlea and retina. Isoform 4 is expressed in retina and developing cochlea but not adult cochlea. Isoform 5 is expressed in adult cochlea but not in developing cochlea or retina.

It localises to the cell projection. Its subcellular location is the cilium. The protein localises to the nucleus. The protein resides in the stereocilium. Functionally, in cochlear developing hair cells, essential in organizing the USH2 complex at stereocilia ankle links. Blocks inhibition of adenylate cyclase activity mediated by ADGRV1. This Mus musculus (Mouse) protein is PDZ domain-containing protein 7.